Consider the following 252-residue polypeptide: 2-succinyl-6-hydroxy-2,4-cyclohexadiene-1-carboxylate synthase (252 aa).

The protein belongs to the AB hydrolase superfamily. MenH family. In terms of assembly, monomer.

It carries out the reaction 5-enolpyruvoyl-6-hydroxy-2-succinyl-cyclohex-3-ene-1-carboxylate = (1R,6R)-6-hydroxy-2-succinyl-cyclohexa-2,4-diene-1-carboxylate + pyruvate. The protein operates within quinol/quinone metabolism; 1,4-dihydroxy-2-naphthoate biosynthesis; 1,4-dihydroxy-2-naphthoate from chorismate: step 3/7. Its pathway is quinol/quinone metabolism; menaquinone biosynthesis. Functionally, catalyzes a proton abstraction reaction that results in 2,5-elimination of pyruvate from 2-succinyl-5-enolpyruvyl-6-hydroxy-3-cyclohexene-1-carboxylate (SEPHCHC) and the formation of 2-succinyl-6-hydroxy-2,4-cyclohexadiene-1-carboxylate (SHCHC). This chain is 2-succinyl-6-hydroxy-2,4-cyclohexadiene-1-carboxylate synthase, found in Escherichia coli O157:H7.